A 337-amino-acid chain; its full sequence is Large ribosomal subunit protein uL3 (337 aa).

Residues 1–32 (MAKGHRPRRGSLAYSPRKRSQSHIPRFRSWPE) form a disordered region.

It belongs to the universal ribosomal protein uL3 family. Part of the 50S ribosomal subunit. Forms a cluster with proteins L14 and L24e.

One of the primary rRNA binding proteins, it binds directly near the 3'-end of the 23S rRNA, where it nucleates assembly of the 50S subunit. This Methanococcoides burtonii (strain DSM 6242 / NBRC 107633 / OCM 468 / ACE-M) protein is Large ribosomal subunit protein uL3.